The chain runs to 888 residues: E3 ubiquitin-protein ligase SH3RF1 (888 aa).

The RING-type zinc finger occupies 12–53 (CPVCLERLDASAKVLPCQHTFCKRCLLGIVGSRNELRCPECR). Positions 108–127 (SSKDLQSSQGGQQPRVQSWS) are enriched in polar residues. Residues 108–128 (SSKDLQSSQGGQQPRVQSWSP) form a disordered region. 2 consecutive SH3 domains span residues 134-193 (PQLP…IIKP) and 196-259 (QPPP…FNSA). Residues 275-321 (DAGECSSAAAQSSTAPKHSDTKKNTKKRHSFTSLTMANKSSQASQNR) form a disordered region. Residues 292–362 (HSDTKKNTKK…APSQVHISTT (71 aa)) form an interaction with RAC1 region. S304 is subject to Phosphoserine. Over residues 305–321 (FTSLTMANKSSQASQNR) the composition is skewed to polar residues. Positions 440 to 543 (HLRPQTRPSV…STAGGPAQKL (104 aa)) are interaction with AKT2. Positions 445–506 (TRPSVYVAIY…PGNYVAPVTR (62 aa)) constitute an SH3 3 domain. 3 disordered regions span residues 516-548 (VPMS…GNGV), 620-639 (SVGL…LMPG), and 684-741 (TVLP…ASPT). Over residues 520-535 (TAGQTSRGVTMVSPST) the composition is skewed to polar residues. S532 is modified (phosphoserine). The segment covering 692–704 (SPDSASSACGNSS) has biased composition (polar residues). Basic and acidic residues predominate over residues 707–718 (KPDKDSKKEKKG). S735 bears the Phosphoserine mark. An SH3 4 domain is found at 829–888 (VVCERHRVVVSYPPQSEAELELKEGDIVFVHKKREDGWFKGTLQRNGKTGLFPGSFVENI).

It belongs to the SH3RF family. Interacts with RAC1; in a GTP-dependent manner. Interacts with MAP3K10/MLK2 and MAP3K11/MLK3. Interacts with MAPK8IP; this interaction leads to the PJAC complex (POSH-JIP or SH3RF1/MAPK8IP apoptotic complex) with a 1:1 ratio. Interacts with SIAH1. Interacts with HERP1. Probably part of a signaling complex that may contain SH3RF1, MAPK8IP, DLK1, MAP2K4/MKK4, MAP2K7/MKK7, MAPK8/JNK1, MAPK9/JNK2, AKT1 and AKT2. Found in a complex with RAC2, MAP3K7/TAK1, MAP2K7/MKK7, MAPK8IP1/JIP1, MAPK8/JNK1 and MAPK9/JNK2. Found in a complex with RAC1, MAP3K11/MLK3, MAP2K7/MKK7, MAPK8IP1/JIP1 and MAPK8/JNK1. Interacts with SH3RF2. Phosphorylated at Ser-304 by AKT1 and AKT2. When phosphorylated, it has reduced ability to bind Rac. In terms of processing, autoubiquitinated. Ubiquitinated by SH3RF2, leading to proteasome-mediated degradation.

Its subcellular location is the cytoplasm. The protein localises to the perinuclear region. The protein resides in the cell projection. It is found in the lamellipodium. It localises to the golgi apparatus. Its subcellular location is the trans-Golgi network. The enzyme catalyses S-ubiquitinyl-[E2 ubiquitin-conjugating enzyme]-L-cysteine + [acceptor protein]-L-lysine = [E2 ubiquitin-conjugating enzyme]-L-cysteine + N(6)-ubiquitinyl-[acceptor protein]-L-lysine.. It participates in protein modification; protein ubiquitination. Has E3 ubiquitin-protein ligase activity. In the absence of an external substrate, it can catalyze self-ubiquitination. Stimulates ubiquitination of potassium channel KCNJ1, enhancing it's dynamin-dependent and clathrin-independent endocytosis. Acts as a scaffold protein that coordinates with MAPK8IP1/JIP1 in organizing different components of the JNK pathway, including RAC1 or RAC2, MAP3K11/MLK3 or MAP3K7/TAK1, MAP2K7/MKK7, MAPK8/JNK1 and/or MAPK9/JNK2 into a functional multiprotein complex to ensure the effective activation of the JNK signaling pathway. Regulates the differentiation of CD4(+) and CD8(+) T-cells and promotes T-helper 1 (Th1) cell differentiation. Regulates the activation of MAPK8/JNK1 and MAPK9/JNK2 in CD4(+) T-cells and the activation of MAPK8/JNK1 in CD8(+) T-cells. Plays a crucial role in the migration of neocortical neurons in the developing brain. Controls proper cortical neuronal migration and the formation of proximal cytoplasmic dilation in the leading process (PCDLP) in migratory neocortical neurons by regulating the proper localization of activated RAC1 and F-actin assembly. Functionally, (Microbial infection) Plays an essential role in the targeting of HIV-1 Gag to the plasma membrane, this function is dependent on it's RING domain, and hence it's E3 ligase activity. The protein is E3 ubiquitin-protein ligase SH3RF1 (SH3RF1) of Homo sapiens (Human).